We begin with the raw amino-acid sequence, 372 residues long: Glutamate 5-kinase (372 aa).

An ATP-binding site is contributed by Lys14. 3 residues coordinate substrate: Ser54, Asp141, and Asn153. Residue 173–174 (TD) participates in ATP binding. The region spanning 280–358 (RGRVVIDAGA…SEIESVLGHL (79 aa)) is the PUA domain.

The protein belongs to the glutamate 5-kinase family.

It localises to the cytoplasm. The catalysed reaction is L-glutamate + ATP = L-glutamyl 5-phosphate + ADP. It participates in amino-acid biosynthesis; L-proline biosynthesis; L-glutamate 5-semialdehyde from L-glutamate: step 1/2. Its function is as follows. Catalyzes the transfer of a phosphate group to glutamate to form L-glutamate 5-phosphate. The chain is Glutamate 5-kinase from Cupriavidus pinatubonensis (strain JMP 134 / LMG 1197) (Cupriavidus necator (strain JMP 134)).